Consider the following 524-residue polypeptide: Caffeate CoA-transferase (524 aa).

Residue glutamate 323 is the 5-glutamyl coenzyme A thioester intermediate of the active site.

It belongs to the 3-oxoacid CoA-transferase family. As to quaternary structure, homodimer.

The catalysed reaction is hydrocaffeoyl-CoA + (E)-caffeate = 3-(3,4-dihydroxyphenyl)propanoate + (E)-caffeoyl-CoA. Functionally, involved in caffeate respiration, which consists in the reduction of the C-C double bond of caffeate. CarA catalyzes an energy-saving CoA loop for caffeate activation in the steady state of caffeate respiration. It catalyzes the formation of caffeyl-CoA from caffeate with hydrocaffeyl-CoA as the CoA donor via a ping-pong mechanism. In addition to caffeate, the enzyme can utilize 4-coumarate or ferulate as CoA acceptor. Neither acetyl-CoA nor butyryl-CoA served as the CoA donor. The sequence is that of Caffeate CoA-transferase from Acetobacterium woodii.